The primary structure comprises 591 residues: Acetyltransferase spyB (591 aa).

Asparagine 114 carries N-linked (GlcNAc...) asparagine glycosylation. A run of 9 helical transmembrane segments spans residues 123 to 143 (GTII…LIFL), 168 to 188 (TLLY…ILIL), 199 to 219 (LWIF…ISHG), 228 to 248 (VGVQ…INPL), 309 to 329 (SAFL…LNCA), 383 to 403 (ASIL…PLFG), 453 to 473 (IFFV…LMGI), 481 to 501 (ILFF…QAAW), and 529 to 549 (LVGF…WLCP).

This sequence belongs to the wax synthase family.

The protein resides in the membrane. The catalysed reaction is sartorypyrone F + acetyl-CoA = sartorypyrone G + CoA. It catalyses the reaction sartorypyrone D + acetyl-CoA = sartorypyrone A + CoA. Its pathway is secondary metabolite biosynthesis; terpenoid biosynthesis. Functionally, acetyltransferase; part of the gene cluster that mediates the biosynthesis of meroterpenoids called sartorypyrones. SpyB catalyzes the last step of the pathway and is responsible for the acetylation of sartorypyrones D and F to produce sartorypyrones A and G, respectively. The biosynthesis of sartorypyrones begins with the production of triacetic acid lactone (TAL) by the NR-PKS spyA using one molecule of acetyl-CoA and two molecules of malonyl-CoA. The prenyltransferase spyF then conjugates geranylgeranyl pyrophosphate (GGPP) to TAL to form geranylgeranyl-triacetate lactone, for which the pathway-specific geranylgeranyl pyrophosphate synthase (GGPS) spyE is required to provide GGPP. Subsequently, geranylgeranyl-triacetate lactone is epoxidized at the terminal olein by the FAD-dependent monooxygenase spyC, followed by cyclization of the terpenoid component catalyzed by the terpene cyclase spyD to produce both the bicyclic sartorypyrone F and the monocyclic sartorypyrone D. Finally, the last step of the biosynthesis involves the acetylation of the meroterpenoids sartorypyrones D and F by the acetyltransferase SpyB to produce sartorypyrones A and G, respectively. This chain is Acetyltransferase spyB, found in Aspergillus fumigatus (strain ATCC MYA-4609 / CBS 101355 / FGSC A1100 / Af293) (Neosartorya fumigata).